A 218-amino-acid polypeptide reads, in one-letter code: Embryonic polyadenylate-binding protein 2-B (218 aa).

2 disordered regions span residues 1–24 (MSER…ELDD) and 169–218 (RTNM…NNPY). Positions 93-170 (RSVYVGNVDY…RTIKVLPKRT (78 aa)) constitute an RRM domain. Basic residues predominate over residues 198–209 (QRPRGRPFRGRG).

As to quaternary structure, homodimer; Upon poly(A) binding, undergoes a dimer-monomer transition that removes the polyproline motif from the RNA recognition site and allows it to be replaced by the adenosine nucleotides of poly(A).

It localises to the cytoplasm. Binds the poly(A) tail of mRNA. Unable to interact with the cap-binding complex and is therefore unlikely to be involved in translation initiation. The chain is Embryonic polyadenylate-binding protein 2-B (Pabpn1l-b) from Xenopus laevis (African clawed frog).